A 651-amino-acid chain; its full sequence is Polyadenylate-binding protein 1 (651 aa).

Over residues 1–27 (MSSTESPVPAAAAPAEAVPASTPAPAA) the composition is skewed to low complexity. The tract at residues 1 to 42 (MSSTESPVPAAAAPAEAVPASTPAPAAEQPAVGNGEQRNNAD) is disordered. 4 RRM domains span residues 47–125 (TSLY…WSQR), 135–211 (GNIF…HHIP), 227–304 (TNVY…RAQK), and 330–407 (VNLY…LAQR). Disordered stretches follow at residues 481–554 (QPGQ…EADQ) and 632–651 (QNDSAGAEAEANAEAPKTEA). The segment covering 529 to 540 (AGQPVPGQPMPR) has biased composition (pro residues). In terms of domain architecture, PABC spans 555–632 (PGALTAAALA…ALEVLKEYQQ (78 aa)). A compositionally biased stretch (low complexity) spans 636-651 (AGAEAEANAEAPKTEA).

The protein belongs to the polyadenylate-binding protein type-1 family. In terms of assembly, part of large ribonucleoprotein complexes (mRNPs) containing RNA-binding proteins RRM4 and PAB1, endosome-binding protein UPA1, core scaffold protein UPA2 and associated factor GRP1. Interacts (via PABC domain) with UPA1 (via PAM2 domain). Interacts (via PABC domain) with UPA2 (via PAM2 domains).

It localises to the cytoplasm. The protein resides in the cytoskeleton. It is found in the endosome. Functionally, RNA-binding protein involved in the formation of polar-growing hyphae which is essential for infection by the plant pathogen. Component of endosomal mRNA transport that regulates polarity of the infectious hyphae by transporting a broad spectrum of cargo mRNAs from the nucleus to cell poles. The protein is Polyadenylate-binding protein 1 of Mycosarcoma maydis (Corn smut fungus).